The chain runs to 258 residues: Indole-3-glycerol phosphate synthase (258 aa).

This sequence belongs to the TrpC family.

It catalyses the reaction 1-(2-carboxyphenylamino)-1-deoxy-D-ribulose 5-phosphate + H(+) = (1S,2R)-1-C-(indol-3-yl)glycerol 3-phosphate + CO2 + H2O. It functions in the pathway amino-acid biosynthesis; L-tryptophan biosynthesis; L-tryptophan from chorismate: step 4/5. This Geobacillus sp. (strain WCH70) protein is Indole-3-glycerol phosphate synthase.